Here is a 937-residue protein sequence, read N- to C-terminus: Protocadherin alpha-7 (937 aa).

An N-terminal signal peptide occupies residues 1-29 (MVNLRGYNWKSQQLLLFLIIVAAWEAGSG). The Extracellular portion of the chain corresponds to 30–697 (QLHYSVPEEA…RVDQRLVDVN (668 aa)). Cadherin domains are found at residues 34-133 (SVPE…PPMF), 157-242 (ASDA…APVF), 243-350 (DRSL…APQL), 351-455 (TVSS…APLF), 456-565 (AQPE…APTL), and 587-682 (PGQV…SSKV). C96 and C102 are oxidised to a cystine. 2 O-linked (Man) threonine glycosylation sites follow: T223 and T225. Residues N257 and N265 are each glycosylated (N-linked (GlcNAc...) asparagine). The O-linked (Man) threonine glycan is linked to T438. O-linked (Man) serine glycosylation is present at S478. N548 carries N-linked (GlcNAc...) asparagine glycosylation. Residues 698–718 (VYLIIAICAVSSLLVLTLLLY) traverse the membrane as a helical segment. Residues 719-937 (TALRCSATPT…GNSTTDNSDQ (219 aa)) are Cytoplasmic-facing. 2 disordered regions span residues 755–794 (RQRV…PDWR) and 816–843 (RAGP…EVSP). PXXP repeat units follow at residues 774-777 (PSLP), 786-789 (PRQP), 819-822 (PGGP), 860-863 (PGNP), and 878-881 (PGSP). The tract at residues 774–881 (PSLPQGPSST…PDKFIIPGSP (108 aa)) is 5 X 4 AA repeats of P-X-X-P. Residues 775–787 (SLPQGPSSTDNPR) are compositionally biased toward polar residues. Residues 887–937 (RQEPANNQIDKSDFITFGKKEETKKKKKKKKGNKTQEKKEKGNSTTDNSDQ) are disordered. The span at 896 to 910 (DKSDFITFGKKEETK) shows a compositional bias: basic and acidic residues.

As to quaternary structure, forms homodimers in trans (molecules expressed by two different cells). Forms promiscuous heterodimers in cis (at the plasma membrane of the same cell) with other protocadherins.

It is found in the cell membrane. In terms of biological role, calcium-dependent cell-adhesion protein involved in cells self-recognition and non-self discrimination. Thereby, it is involved in the establishment and maintenance of specific neuronal connections in the brain. The polypeptide is Protocadherin alpha-7 (Mus musculus (Mouse)).